The primary structure comprises 672 residues: Inner kinetochore subunit mis6 (672 aa).

This sequence belongs to the CENP-I/CTF3 family. Component of the inner kinetochore constitutive centromere-associated network (CCAN) (also known as central kinetochore Sim4 complex in fission yeast), which is composed of at least cnl2, cnp3, cnp20, fta1, fta2, fta3, fta4, fta6, fta7, mal2, mhf1, mhf2, mis6, mis15, mis17, sim4 and wip1. Interacts with cnp1, sim4, mis15 and mis17.

It localises to the nucleus. It is found in the chromosome. Its subcellular location is the centromere. In terms of biological role, component of the kinetochore, a multiprotein complex that assembles on centromeric DNA and attaches chromosomes to spindle microtubules, mediating chromosome segregation and sister chromatid segregation during meiosis and mitosis. Component of the inner kinetochore constitutive centromere-associated network (CCAN), which serves as a structural platform for outer kinetochore assembly. Required for the localization of cnp1 to the centromere. The polypeptide is Inner kinetochore subunit mis6 (mis6) (Schizosaccharomyces pombe (strain 972 / ATCC 24843) (Fission yeast)).